The following is a 397-amino-acid chain: (S)-8-oxocitronellyl enol synthase ISY2 (397 aa).

Residues 36-38 (TGL), 64-65 (RR), 82-83 (DV), 106-107 (TW), glutamine 144, tyrosine 180, isoleucine 207, and 214-216 (SMM) contribute to the NADP(+) site. Residue tyrosine 180 is part of the active site.

It belongs to the short-chain dehydrogenases/reductases (SDR) family.

The enzyme catalyses (S)-8-oxocitronellyl enol + NADP(+) = (6E)-8-oxogeranial + NADPH + H(+). The catalysed reaction is (S)-8-oxocitronellyl enol + NAD(+) = (6E)-8-oxogeranial + NADH + H(+). Functionally, iridoid synthase that catalyzes the first step in generation of the iridoid ring scaffold using the linear monoterpene (6E)-8-oxogeranial as substrate. Iridoids comprise a large family of distinctive bicyclic monoterpenes that possess a wide range of pharmacological activities, including anticancer, anti-inflammatory, antifungal and antibacterial activities. Catalyzes the conversion of the linear monoterpene (6E)-8-oxogeranial to (S)-8-oxocitronellyl enol, a precursor of nepetalactones, which are metabolites that are both insect-repellent and have euphoric effect in cats. This is (S)-8-oxocitronellyl enol synthase ISY2 from Nepeta cataria (Catnip).